The sequence spans 277 residues: MKLIDFDVDNDRPFFLIAGPCVIESEYLALHTAEVLKTITDELKIPFIYKSSFDKANRSSGASFRGLGLAEGLRILAKVKETFAVPILTDVHEYTPLDEVASVVDVLQTPAFLCRQTDFITRVCAQGKPVNIKKGQFLAPWDMKHVVAKAKATGNEQIMLCERGASFGYNNLVADMRSLAVMKTFSAPVVFDATHSVQLPGGNGASSGGQREFVPVLARAAIAVGVAGIFMETHPEPEKALSDGANSIPLAQMRHLLQQLRALDTLVKTNELMKELS.

It belongs to the KdsA family.

It localises to the cytoplasm. It carries out the reaction D-arabinose 5-phosphate + phosphoenolpyruvate + H2O = 3-deoxy-alpha-D-manno-2-octulosonate-8-phosphate + phosphate. Its pathway is carbohydrate biosynthesis; 3-deoxy-D-manno-octulosonate biosynthesis; 3-deoxy-D-manno-octulosonate from D-ribulose 5-phosphate: step 2/3. It participates in bacterial outer membrane biogenesis; lipopolysaccharide biosynthesis. The sequence is that of 2-dehydro-3-deoxyphosphooctonate aldolase from Dichelobacter nodosus (strain VCS1703A).